Here is a 313-residue protein sequence, read N- to C-terminus: Adhesin MafA 2/3 (313 aa).

Residues 1 to 14 (MKTLLLLIPLVLTA) form the signal peptide. Cys15 is lipidated: N-palmitoyl cysteine. The S-diacylglycerol cysteine moiety is linked to residue Cys15. Residues 282–298 (GDTTAQNRPDFKQNNGK) show a composition bias toward polar residues. The tract at residues 282–313 (GDTTAQNRPDFKQNNGKNPDVGNEVIRRRKGG) is disordered.

This sequence belongs to the MafA family.

It is found in the cell outer membrane. The sequence is that of Adhesin MafA 2/3 (mafA2) from Neisseria gonorrhoeae (strain ATCC 700825 / FA 1090).